Reading from the N-terminus, the 675-residue chain is Sodium/myo-inositol cotransporter 2 (675 aa).

At 1–27 the chain is on the extracellular side; it reads MESGTSSPQPPQLDPLDAFPQKGLEPG. A helical membrane pass occupies residues 28–48; sequence DIAVLVLYFLFVLAVGLWSTV. Over 49 to 65 the chain is Cytoplasmic; it reads KTKRDTVKGYFLAGGDM. A helical transmembrane segment spans residues 66-88; that stretch reads VWWPVGASLFASNVGSGHFIGLA. Over 89-102 the chain is Extracellular; it reads GSGAATGISVSAYE. A helical membrane pass occupies residues 103 to 123; the sequence is LNGLFSVLMLAWIFLPIYIAG. Topologically, residues 124–135 are cytoplasmic; the sequence is QVTTMPEYLRKR. Residues 136–156 traverse the membrane as a helical segment; the sequence is FGGIRIPIILAVLYLFIYIFT. Residues 157–180 are Extracellular-facing; it reads KISVDMYAGAIFIQQSLHLDLYLA. A helical membrane pass occupies residues 181-201; it reads IVGLLAITAVYTVAGGLAAVI. Residues 202 to 208 are Cytoplasmic-facing; the sequence is YTDALQT. A helical membrane pass occupies residues 209-229; the sequence is LIMLIGALTLMGYSFAAVGGM. At 230-272 the chain is on the extracellular side; it reads EGLKEKYFLALASNRSENSSCGLPREDAFHIFRDPLTSDLPWP. The chain crosses the membrane as a helical span at residues 273-293; that stretch reads GVLFGMSIPSLWYWCTDQVIV. The Cytoplasmic portion of the chain corresponds to 294-308; that stretch reads QRTLAAKNLSHAKGG. Residues 309–329 form a helical membrane-spanning segment; sequence ALMAAYLKVLPLFIMVFPGMV. The Extracellular portion of the chain corresponds to 330–375; sequence SRILFPDQVACADPEICQKICSNPSGCSDIAYPKLVLELLPTGLRG. A helical transmembrane segment spans residues 376–396; the sequence is LMMAVMVAALMSSLTSIFNSA. Residues 397–418 are Cytoplasmic-facing; it reads STIFTMDLWNHLRPRASEKELM. A helical transmembrane segment spans residues 419–439; the sequence is IVGRVFVLLLVLVSILWIPVV. Topologically, residues 440–446 are extracellular; sequence QASQGGQ. A helical membrane pass occupies residues 447 to 467; sequence LFIYIQSISSYLQPPVAVVFI. Residues 468-479 are Cytoplasmic-facing; sequence MGCFWKRTNEKG. A helical membrane pass occupies residues 480 to 500; that stretch reads AFWGLISGLLLGLVRLVLDFI. The Extracellular segment spans residues 501–521; that stretch reads YVQPRCDQPDERPVLVKSIHY. Residues 522–542 form a helical membrane-spanning segment; that stretch reads LYFSMILSTVTLITVSTVSWF. The Cytoplasmic portion of the chain corresponds to 543-654; that stretch reads TEPPSKEMVS…SLEENPLVKT (112 aa). The helical transmembrane segment at 655 to 675 threads the bilayer; that stretch reads LLDVNLIFCVSCAIFIWGYFA.

It belongs to the sodium:solute symporter (SSF) (TC 2.A.21) family. Highest expression in heart, skeletal muscle, kidney, liver and placenta. Weaker expression in brain, colon, spleen, lung and peripheral blood leukocytes.

Its subcellular location is the membrane. It is found in the apical cell membrane. It carries out the reaction myo-inositol(out) + 2 Na(+)(out) = myo-inositol(in) + 2 Na(+)(in). It catalyses the reaction 1D-chiro-inositol(out) + 2 Na(+)(out) = 1D-chiro-inositol(in) + 2 Na(+)(in). The catalysed reaction is D-glucose(out) + 2 Na(+)(out) = D-glucose(in) + 2 Na(+)(in). The enzyme catalyses D-xylose(out) + 2 Na(+)(out) = D-xylose(in) + 2 Na(+)(in). Its activity is regulated as follows. MI transport activity inhibited by D-chiro-inositol (DCI), phlorizin (Pz) and sodium (Na(+)). Insulin increases D-chiro-inositol uptake. Involved in the sodium-dependent cotransport of myo-inositol (MI) with a Na(+):MI stoichiometry of 2:1. Exclusively responsible for apical MI transport and absorption in intestine. Can also transport D-chiro-inositol (DCI) but not L-fucose. Exhibits stereospecific cotransport of both D-glucose and D-xylose. May induce apoptosis through the TNF-alpha, PDCD1 pathway. May play a role in the regulation of MI concentration in serum, involving reabsorption in at least the proximal tubule of the kidney. The sequence is that of Sodium/myo-inositol cotransporter 2 from Homo sapiens (Human).